Here is a 181-residue protein sequence, read N- to C-terminus: UPF0200 protein Ta0179 (181 aa).

6-13 (GMPGAGKD) contacts ATP.

The protein belongs to the UPF0200 family.

The polypeptide is UPF0200 protein Ta0179 (Thermoplasma acidophilum (strain ATCC 25905 / DSM 1728 / JCM 9062 / NBRC 15155 / AMRC-C165)).